The sequence spans 38 residues: Large ribosomal subunit protein bL36 (38 aa).

The protein belongs to the bacterial ribosomal protein bL36 family.

This is Large ribosomal subunit protein bL36 from Alcanivorax borkumensis (strain ATCC 700651 / DSM 11573 / NCIMB 13689 / SK2).